The primary structure comprises 359 residues: GDSL esterase/lipase At5g03610 (359 aa).

Positions 1–22 (MDSLIKLFFCLFIFLCTSLLFG) are cleaved as a signal peptide. Catalysis depends on serine 50, which acts as the Nucleophile. Asparagine 136, asparagine 236, and asparagine 259 each carry an N-linked (GlcNAc...) asparagine glycan. Residues aspartate 332 and histidine 335 contribute to the active site.

This sequence belongs to the 'GDSL' lipolytic enzyme family.

It localises to the secreted. In Arabidopsis thaliana (Mouse-ear cress), this protein is GDSL esterase/lipase At5g03610.